We begin with the raw amino-acid sequence, 238 residues long: Expansin-like protein 5 (238 aa).

The first 21 residues, 1 to 21, serve as a signal peptide directing secretion; sequence MRINFKLILIILTSFYGIINC. Residues 45–145 form the Expansin-like EG45 domain; that stretch reads NGNCGFGKLT…VKVPCRVSGN (101 aa). 2 disulfides stabilise this stretch: Cys-48-Cys-78 and Cys-81-Cys-140. N-linked (GlcNAc...) asparagine glycosylation occurs at Asn-89.

Belongs to the expansin family. Expansin A subfamily.

The protein resides in the secreted. Its function is as follows. May serve to lubricate the movement of the cellulose microfibrils during cell growth and wall extension and/or may serve to maintain the fluid state of the slug cell wall. This chain is Expansin-like protein 5 (expl5), found in Dictyostelium discoideum (Social amoeba).